The primary structure comprises 114 residues: Cytochrome c oxidase subunit 7A2-like, mitochondrial (114 aa).

The N-terminal 55 residues, 1 to 55 (MYYKFSGFTQKLAGAWASDAYSPQGLRPVVSTEAPPIIFATPTKLSSGPTAYDYA), are a transit peptide targeting the mitochondrion. Position 69 is an N6-acetyllysine (lysine 69). A helical membrane pass occupies residues 82-107 (PDQMLYRTTMALTVGGTIYCLIALYM).

This sequence belongs to the cytochrome c oxidase VIIa family. As to quaternary structure, interacts with the mitochondrial respiratory complexes III (CIII) and IV (CIV), promoting their association.

It localises to the mitochondrion inner membrane. Functionally, assembly factor that mediates the formation of some mitochondrial respiratory supercomplexes (respirasomes), thereby promoting oxidative phosphorylation and energy metabolism. Acts as a molecular adapter that associates with both mitochondrial respiratory complexes III (CIII) and IV (CIV), promoting their association. Mediates the formation of various mitochondrial respiratory supercomplexes, such as MCIII(2)IV(2), composed of two CIII and two CIV, and the CS-respirasome (MCI(1)III(2)IV(2)), composed of one CI, two CIII and two CIV. Not involved in the formation of the canonical respirasome (MCI(1)III(2)IV(1)), composed of one CI, two CIII and one CIV. The formation of different respirasomes is important for cell adaptation to oxygen conditions and prevent metabolic exhaustion: supercomplexes mediated by COX7A2L/SCAF1 are required to maintain oxidative phosphorylation upon low oxygen conditions and promote metabolic rewiring toward glycolysis. The chain is Cytochrome c oxidase subunit 7A2-like, mitochondrial from Bos taurus (Bovine).